We begin with the raw amino-acid sequence, 348 residues long: Protein arginine N-methyltransferase 1 (348 aa).

The SAM-dependent MTase PRMT-type domain occupies 24-342 (KDYYFDSYAH…KGEVCDLNEQ (319 aa)). The S-adenosyl-L-methionine site is built by His-37, Arg-46, Gly-70, Glu-92, and Glu-121. Residues Glu-139 and Glu-148 contribute to the active site.

Belongs to the class I-like SAM-binding methyltransferase superfamily. Protein arginine N-methyltransferase family. As to quaternary structure, interacts with daf-16. Interacts with pgl-1 and pgl-3. Interacts with alg-1. In terms of tissue distribution, widely expressed in pharyngeal, body wall muscle, intestinal and vulval cells.

The protein localises to the cytoplasm. It localises to the nucleus. The catalysed reaction is L-arginyl-[protein] + 2 S-adenosyl-L-methionine = N(omega),N(omega)-dimethyl-L-arginyl-[protein] + 2 S-adenosyl-L-homocysteine + 2 H(+). The enzyme catalyses L-arginyl-[protein] + S-adenosyl-L-methionine = N(omega)-methyl-L-arginyl-[protein] + S-adenosyl-L-homocysteine + H(+). Arginine methyltransferase that methylates (mono and asymmetric dimethylation) the guanidino nitrogens of arginyl residues present in target proteins. Catalyzes the formation of monomethylarginine and asymmetric dimethylarginine on histones H2A and H4, a specific tag for epigenetic transcriptional activation. Catalyzes asymmetric arginine dimethylation of mitochondrial proteins necessary for mitochondrial oxidative phosphorylation activity and thus aerobic respiration and ATP synthesis, and the mitochondrial stress response. Methylates arginine residues in P-granule components pgl-1 and pgl-3 to promote P-granule degradation by autophagy in somatic cells to ensure exclusive localization of the P-granules in germ cells. Modulates the interaction of P-granule proteins epg-2 and sepa-1. Methylates arginine residues in daf-16, which blocks ftt-2 binding to daf-16, prevents akt-mediated phosphorylation and allows for daf-16 to translocate to the nucleus. In turn, association with daf-16 therefore allows for the transcriptional activation of daf-16 and regulation of longevity-related genes. Maintains lifespan by modulating daf-16 activity downstream of the daf-2 signaling pathway. Plays a role in heat and oxidative stress resistance. Role in stress resistance and also fat storage may be in association with the daf-2 signaling pathway. Required for normal feeding behavior. This is Protein arginine N-methyltransferase 1 from Caenorhabditis elegans.